We begin with the raw amino-acid sequence, 358 residues long: Protein-arginine kinase (358 aa).

Positions 24-255 constitute a Phosphagen kinase C-terminal domain; sequence IVLSSRIRLA…KQLIRQERVA (232 aa). Residues 27–31, histidine 92, arginine 126, 177–181, and 208–213 each bind ATP; these read SSRIR, RASVM, and RGIYGE. Positions 338-343 match the RDXXRA motif of the pArg binding pocket involved in allosteric regulation motif; the sequence is RDERRA.

The protein belongs to the ATP:guanido phosphotransferase family.

The catalysed reaction is L-arginyl-[protein] + ATP = N(omega)-phospho-L-arginyl-[protein] + ADP + H(+). Appears to be allosterically activated by the binding of pArg-containing polypeptides to the pArg-binding pocket localized in the C-terminal domain of McsB. Its function is as follows. Catalyzes the specific phosphorylation of arginine residues in a large number of proteins. Is part of the bacterial stress response system. Protein arginine phosphorylation has a physiologically important role and is involved in the regulation of many critical cellular processes, such as protein homeostasis, motility, competence, and stringent and stress responses, by regulating gene expression and protein activity. In Shouchella clausii (strain KSM-K16) (Alkalihalobacillus clausii), this protein is Protein-arginine kinase.